The sequence spans 430 residues: Tol-Pal system protein TolB (430 aa).

Positions 1–21 are cleaved as a signal peptide; the sequence is MKQALRVAFGFLILWASVLHA.

It belongs to the TolB family. In terms of assembly, the Tol-Pal system is composed of five core proteins: the inner membrane proteins TolA, TolQ and TolR, the periplasmic protein TolB and the outer membrane protein Pal. They form a network linking the inner and outer membranes and the peptidoglycan layer.

The protein resides in the periplasm. In terms of biological role, part of the Tol-Pal system, which plays a role in outer membrane invagination during cell division and is important for maintaining outer membrane integrity. TolB occupies a key intermediary position in the Tol-Pal system because it communicates directly with both membrane-embedded components, Pal in the outer membrane and TolA in the inner membrane. The polypeptide is Tol-Pal system protein TolB (Shigella flexneri serotype 5b (strain 8401)).